We begin with the raw amino-acid sequence, 917 residues long: MKKLVKSAVVFAGLVFIGTSATMITEKASAASTDPVQKVDGQATYIPKGVRDGTATEEHDGFEDGTNSVLQQVPLLRATTGYPDVNAYIKSNKFSTAKIEKQLKSQFPKFNYRNGYGKPEGIVIHETANNSSTITGEINYMSTNYNNAFVHAFVDKSRIIQIHPTENGVWGAGQYANARFIQVELVRSKTFDEFARSINNYAYYAAYLLDQYNLPVDSAHSDGKGTVWSHDAVTRYLGGTTHTDPVAYFNQWGYNFNNFVSLINEKYKAMQVNYEKIEYDKAITAYSRVKTATGNSVWTKPNKTEGAKLVNPLSSYSGKNLRIIREAKTSGGTIWYQFSVGGKTIGWVDSKALNTFYTPSMEKTITGTRYVLPSKQTVHYYGLPVEDSAIDRGPLSKFNGQALTLQREATIEGQLWYRVKDLGWVKAVNLTTTKYDLIEYDKAITAYSRVKTAAGNYVWSKPNKTEGAKQGSALSTYSGKNMRIIREAKTSSGTIWYQFSIDGKTIGWVDTKALNTFYTPSMEKNLTATRYVAPGQETQHYYGLPVADSAIDRGPLSKFAGQTLTVQREATIEGQLWYRVKDLGWTKASTLTATQYDKLEYDKAITAYSRVKTATGNSVWTKPYRTSGYKLVNPLSSYAGKNLRIIREAKTSSGIWYQFSVGGKTIGWVDSKALNTFYTPSMEKTITGTRYVLPSKQTVHYYGLPVEDSAIDRGPLSKFNGQALTLQREATIEGQLWYRVKDLGWVKAANLTTTKYDTLSYDKAITAYSRVKTATGNSVWTKPNKIEGAQKISALSTYSGKNMRILREAKTSSGTIWYQFSVGGKTIGWVETKALNTFYTPSMEKNLTATRYVLTSKKNEHYYGLPVVDSAIDRGPLSKFSGKTLTVQREATIEGQLWYRVKDLGWTKAANLSAKKQ.

The first 30 residues, 1–30 (MKKLVKSAVVFAGLVFIGTSATMITEKASA), serve as a signal peptide directing secretion. Residues 118–245 (KPEGIVIHET…YLGGTTHTDP (128 aa)) form the N-acetylmuramoyl-L-alanine amidase domain. Residues 262–917 (LINEKYKAMQ…KAANLSAKKQ (656 aa)) are GW repeat region, necessary and sufficient for cell surface attachment. GW domains are found at residues 279–358 (YDKA…TFYT), 361–435 (MEKT…TTKY), 440–519 (YDKA…TFYT), 522–596 (MEKN…ATQY), 601–679 (YDKA…TFYT), 682–756 (MEKT…TTKY), 761–840 (YDKA…TFYT), and 843–917 (MEKN…AKKQ).

This sequence in the N-terminal section; belongs to the N-acetylmuramoyl-L-alanine amidase 2 family.

It is found in the cell surface. It localises to the cell membrane. Functionally, a bacteriolysin able to lyse both L.monocytogenes and S.aureus. This chain is Protein Ami, found in Listeria monocytogenes serotype 1/2a (strain EGD / Mackaness).